The chain runs to 54 residues: UPF0391 membrane protein Daro_2080 (54 aa).

2 helical membrane-spanning segments follow: residues 5 to 25 and 30 to 50; these read AIVF…GIAA and IAKI…VMGF.

Belongs to the UPF0391 family.

It localises to the cell membrane. In Dechloromonas aromatica (strain RCB), this protein is UPF0391 membrane protein Daro_2080.